We begin with the raw amino-acid sequence, 262 residues long: 7alpha-hydroxysteroid dehydrogenase (262 aa).

NADP(+) contacts are provided by residues 13-18 (SSTRGI), Arg38, 63-64 (NA), and Asn90. The taurochenodeoxycholate site is built by Thr145 and Tyr158. Residues Tyr158, Lys162, and 191 to 195 (IGTRA) each bind NADP(+). Catalysis depends on Tyr158, which acts as the Proton acceptor.

This sequence belongs to the short-chain dehydrogenases/reductases (SDR) family. Homotetramer. A dynamic equilibrium between dimers and tetramers seems to exist.

The enzyme catalyses cholate + NADP(+) = 3alpha,12alpha-dihydroxy-7-oxo-5beta-cholanate + NADPH + H(+). The catalysed reaction is chenodeoxycholate + NADP(+) = 7-oxolithocholate + NADPH + H(+). It catalyses the reaction 3alpha,7alpha-dihydroxy-12-oxo-5beta-cholanate + NADP(+) = 7,12-dioxo-lithocholate + NADPH + H(+). It carries out the reaction 7alpha-hydroxy-3,12-dioxo-5beta-cholanate + NADP(+) = dehydrocholate + NADPH + H(+). The enzyme catalyses glycochenodeoxycholate + NADP(+) = 7-oxoglycolithocholate + NADPH + H(+). The catalysed reaction is taurochenodeoxycholate + NADP(+) = 7-oxotaurolithocholate + NADPH + H(+). Its activity is regulated as follows. Activated by metal ions such as Mg(2+), Na(+) and K(+). Functionally, 7alpha-hydroxysteroid dehydrogenase that catalyzes the NADP(+)-dependent oxidation of the 7alpha-hydroxy group of 7alpha-hydroxysteroids, such as cholate, chenodeoxycholate, glycochenodeoxycholate and taurochenodeoxycholate, to the corresponding 7-oxosteroids. Is also able to catalyze the reverse reduction reactions. Together with 7beta-HSDH encoded in the adjacent gene, is likely involved in the epimerization of the hydroxy group at C-7 of primary bile acids through 7-keto bile acid intermediates. This is 7alpha-hydroxysteroid dehydrogenase from Clostridium sardiniense (Clostridium absonum).